A 347-amino-acid chain; its full sequence is Protease HtpX homolog (347 aa).

Helical transmembrane passes span 8–28 (IAFG…VVIA), 46–66 (ALTA…IAIV), and 76–96 (WGFI…TYIA). A Zn(2+)-binding site is contributed by histidine 174. The active site involves glutamate 175. Histidine 178 provides a ligand contact to Zn(2+). Helical transmembrane passes span 185–205 (ALML…VSSV) and 221–241 (LLAA…LLVL). Glutamate 248 is a Zn(2+) binding site.

It belongs to the peptidase M48B family. It depends on Zn(2+) as a cofactor.

The protein resides in the cell membrane. This chain is Protease HtpX homolog, found in Pyrobaculum islandicum (strain DSM 4184 / JCM 9189 / GEO3).